A 163-amino-acid polypeptide reads, in one-letter code: Small ribosomal subunit protein uS5 (163 aa).

In terms of domain architecture, S5 DRBM spans 8–71; that stretch reads LIEKIVDLNR…ERAKKGMVQV (64 aa).

It belongs to the universal ribosomal protein uS5 family. As to quaternary structure, part of the 30S ribosomal subunit. Contacts proteins S4 and S8.

Its function is as follows. With S4 and S12 plays an important role in translational accuracy. Functionally, located at the back of the 30S subunit body where it stabilizes the conformation of the head with respect to the body. In Oleidesulfovibrio alaskensis (strain ATCC BAA-1058 / DSM 17464 / G20) (Desulfovibrio alaskensis), this protein is Small ribosomal subunit protein uS5.